The chain runs to 182 residues: ADP-ribosylation factor-like protein 3 (182 aa).

Residue glycine 2 is the site of N-myristoyl glycine attachment. Serine 5 carries the post-translational modification Phosphoserine. GTP contacts are provided by residues 24–31 (GLDNAGKT), threonine 48, 67–71 (DIGGQ), glycine 70, 126–129 (NKQD), and 159–161 (SAL). Positions 31 and 48 each coordinate Mg(2+).

Belongs to the small GTPase superfamily. Arf family. Found in a complex with ARL3, RP2 and UNC119 (or UNC119B); RP2 induces hydrolysis of GTP ARL3 in the complex, leading to the release of UNC119 (or UNC119B). Interacts with RP2; interaction is direct and stimulated with the activated GTP-bound form of ARL3. Interacts with SYS1. Interacts with ARL2BP; the GTP-bound form interacts with ARL2BP. Microtubule-associated protein. Does not interact with TBCC. Interacts with RP2. Interacts with PDE6D; the interaction occurs specifically with the GTP-bound form of ARL3. Interacts with GGA1; the interaction recruits PKD1:PKD2 complex to trans-Golgi network and is required for ciliary targeting of PKD1:PKD2 complex. Interacts with DNAAF9.

It localises to the golgi apparatus membrane. It is found in the cytoplasm. The protein localises to the cytoskeleton. The protein resides in the spindle. Its subcellular location is the nucleus. It localises to the microtubule organizing center. It is found in the centrosome. The protein localises to the cell projection. The protein resides in the cilium. Functionally, small GTP-binding protein which cycles between an inactive GDP-bound and an active GTP-bound form, and the rate of cycling is regulated by guanine nucleotide exchange factors (GEF) and GTPase-activating proteins (GAP). Required for normal cytokinesis and cilia signaling. Requires assistance from GTPase-activating proteins (GAPs) like RP2 and PDE6D, in order to cycle between inactive GDP-bound and active GTP-bound forms. Required for targeting proteins to the cilium, including myristoylated NPHP3 and prenylated INPP5E. Targets NPHP3 to the ciliary membrane by releasing myristoylated NPHP3 from UNC119B cargo adapter into the cilium. Required for PKD1:PKD2 complex targeting from the trans-Golgi network to the cilium. The polypeptide is ADP-ribosylation factor-like protein 3 (ARL3) (Sus scrofa (Pig)).